Reading from the N-terminus, the 434-residue chain is Trigger factor (434 aa).

The PPIase FKBP-type domain occupies 161-246; it reads GDRVVIDFAG…VKGVEAPILP (86 aa).

The protein belongs to the FKBP-type PPIase family. Tig subfamily.

It localises to the cytoplasm. It catalyses the reaction [protein]-peptidylproline (omega=180) = [protein]-peptidylproline (omega=0). In terms of biological role, involved in protein export. Acts as a chaperone by maintaining the newly synthesized protein in an open conformation. Functions as a peptidyl-prolyl cis-trans isomerase. This Aromatoleum aromaticum (strain DSM 19018 / LMG 30748 / EbN1) (Azoarcus sp. (strain EbN1)) protein is Trigger factor.